The chain runs to 488 residues: Probable glycine dehydrogenase (decarboxylating) subunit 2 (488 aa).

At Lys-264 the chain carries N6-(pyridoxal phosphate)lysine.

This sequence belongs to the GcvP family. C-terminal subunit subfamily. The glycine cleavage system is composed of four proteins: P, T, L and H. In this organism, the P 'protein' is a heterodimer of two subunits. Requires pyridoxal 5'-phosphate as cofactor.

It catalyses the reaction N(6)-[(R)-lipoyl]-L-lysyl-[glycine-cleavage complex H protein] + glycine + H(+) = N(6)-[(R)-S(8)-aminomethyldihydrolipoyl]-L-lysyl-[glycine-cleavage complex H protein] + CO2. The glycine cleavage system catalyzes the degradation of glycine. The P protein binds the alpha-amino group of glycine through its pyridoxal phosphate cofactor; CO(2) is released and the remaining methylamine moiety is then transferred to the lipoamide cofactor of the H protein. The chain is Probable glycine dehydrogenase (decarboxylating) subunit 2 from Methylococcus capsulatus (strain ATCC 33009 / NCIMB 11132 / Bath).